The chain runs to 412 residues: AA9 family lytic polysaccharide monooxygenase A (412 aa).

The signal sequence occupies residues 1 to 20 (MKTTTYSLLALAAASKLASA). Cu(2+) is bound by residues H21 and H103. A disulfide bridge connects residues C63 and C186. A glycan (N-linked (GlcNAc...) asparagine) is linked at N151. H172 provides a ligand contact to O2. A Cu(2+)-binding site is contributed by Y183. Residues N334 and N385 are each glycosylated (N-linked (GlcNAc...) asparagine). Residues 373–409 (GVAKMYERCGGINHTGPTTCESGSVCKKWNPYYYQCV) form the CBM1 domain.

It belongs to the polysaccharide monooxygenase AA9 family. Cu(2+) is required as a cofactor.

The protein resides in the secreted. The catalysed reaction is [(1-&gt;4)-beta-D-glucosyl]n+m + reduced acceptor + O2 = 4-dehydro-beta-D-glucosyl-[(1-&gt;4)-beta-D-glucosyl]n-1 + [(1-&gt;4)-beta-D-glucosyl]m + acceptor + H2O.. In terms of biological role, lytic polysaccharide monooxygenase (LPMO) that depolymerizes crystalline and amorphous polysaccharides via the oxidation of scissile alpha- or beta-(1-4)-glycosidic bonds, yielding C4 oxidation products. Catalysis by LPMOs requires the reduction of the active-site copper from Cu(II) to Cu(I) by a reducing agent and H(2)O(2) or O(2) as a cosubstrate. This is AA9 family lytic polysaccharide monooxygenase A (eglD) from Aspergillus niger (strain ATCC MYA-4892 / CBS 513.88 / FGSC A1513).